Here is a 308-residue protein sequence, read N- to C-terminus: Malonate utilization transcriptional regulator (308 aa).

Residues 9–66 form the HTH lysR-type domain; that stretch reads ITFRKLSVFMMFMAKGNIARTAEAMKLSSVSVHRALHTLEEGVGCPLFVHKGRNLLPL. The H-T-H motif DNA-binding region spans 26–45; it reads IARTAEAMKLSSVSVHRALH.

It belongs to the LysR transcriptional regulatory family.

In terms of biological role, transcriptional regulator of the mau genes for malonate utilization. The sequence is that of Malonate utilization transcriptional regulator (mauR) from Klebsiella pneumoniae.